Here is a 382-residue protein sequence, read N- to C-terminus: Dual-specificity RNA methyltransferase RlmN (382 aa).

The active-site Proton acceptor is Glu96. Residues 102–342 (QGGRGTLCVS…VRTTRGEDID (241 aa)) form the Radical SAM core domain. Cys109 and Cys345 are disulfide-bonded. [4Fe-4S] cluster-binding residues include Cys116, Cys120, and Cys123. Residues 170–171 (GE), Ser202, 224–226 (SLH), and Asn302 contribute to the S-adenosyl-L-methionine site. Residue Cys345 is the S-methylcysteine intermediate of the active site.

This sequence belongs to the radical SAM superfamily. RlmN family. [4Fe-4S] cluster is required as a cofactor.

It is found in the cytoplasm. It carries out the reaction adenosine(2503) in 23S rRNA + 2 reduced [2Fe-2S]-[ferredoxin] + 2 S-adenosyl-L-methionine = 2-methyladenosine(2503) in 23S rRNA + 5'-deoxyadenosine + L-methionine + 2 oxidized [2Fe-2S]-[ferredoxin] + S-adenosyl-L-homocysteine. The catalysed reaction is adenosine(37) in tRNA + 2 reduced [2Fe-2S]-[ferredoxin] + 2 S-adenosyl-L-methionine = 2-methyladenosine(37) in tRNA + 5'-deoxyadenosine + L-methionine + 2 oxidized [2Fe-2S]-[ferredoxin] + S-adenosyl-L-homocysteine. Specifically methylates position 2 of adenine 2503 in 23S rRNA and position 2 of adenine 37 in tRNAs. m2A2503 modification seems to play a crucial role in the proofreading step occurring at the peptidyl transferase center and thus would serve to optimize ribosomal fidelity. This chain is Dual-specificity RNA methyltransferase RlmN, found in Stutzerimonas stutzeri (strain A1501) (Pseudomonas stutzeri).